Consider the following 1342-residue polypeptide: DNA-directed RNA polymerase subunit beta (1342 aa).

This sequence belongs to the RNA polymerase beta chain family. The RNAP catalytic core consists of 2 alpha, 1 beta, 1 beta' and 1 omega subunit. When a sigma factor is associated with the core the holoenzyme is formed, which can initiate transcription.

It catalyses the reaction RNA(n) + a ribonucleoside 5'-triphosphate = RNA(n+1) + diphosphate. Functionally, DNA-dependent RNA polymerase catalyzes the transcription of DNA into RNA using the four ribonucleoside triphosphates as substrates. The polypeptide is DNA-directed RNA polymerase subunit beta (Mannheimia succiniciproducens (strain KCTC 0769BP / MBEL55E)).